The sequence spans 453 residues: Citrate (Re)-synthase (453 aa).

In terms of domain architecture, Pyruvate carboxyltransferase spans 46–316 (IYITDTTFRD…TKNMKLHVIT (271 aa)).

The protein belongs to the alpha-IPM synthase/homocitrate synthase family. The cofactor is Mn(2+). Co(2+) is required as a cofactor. Requires Mg(2+) as cofactor.

It carries out the reaction oxaloacetate + acetyl-CoA + H2O = citrate + CoA + H(+). Inhibited by p-chloromercuribenzoate (pCMB), EDTA, Zn(2+) ions, and under aerobic conditions. Its function is as follows. Catalyzes the condensation of the acetyl group of acetyl-CoA with oxaloacetate to form citrate. This enzyme is highly Re-face stereospecific with respect to the C-2 of oxaloacetate. This chain is Citrate (Re)-synthase, found in Clostridium kluyveri (strain ATCC 8527 / DSM 555 / NBRC 12016 / NCIMB 10680 / K1).